Here is a 376-residue protein sequence, read N- to C-terminus: Succinyl-diaminopimelate desuccinylase (376 aa).

Histidine 67 is a binding site for Zn(2+). Aspartate 69 is a catalytic residue. Aspartate 100 provides a ligand contact to Zn(2+). The Proton acceptor role is filled by glutamate 134. 3 residues coordinate Zn(2+): glutamate 135, glutamate 163, and histidine 349.

The protein belongs to the peptidase M20A family. DapE subfamily. In terms of assembly, homodimer. Zn(2+) is required as a cofactor. Co(2+) serves as cofactor.

It carries out the reaction N-succinyl-(2S,6S)-2,6-diaminopimelate + H2O = (2S,6S)-2,6-diaminopimelate + succinate. It functions in the pathway amino-acid biosynthesis; L-lysine biosynthesis via DAP pathway; LL-2,6-diaminopimelate from (S)-tetrahydrodipicolinate (succinylase route): step 3/3. Its function is as follows. Catalyzes the hydrolysis of N-succinyl-L,L-diaminopimelic acid (SDAP), forming succinate and LL-2,6-diaminopimelate (DAP), an intermediate involved in the bacterial biosynthesis of lysine and meso-diaminopimelic acid, an essential component of bacterial cell walls. In Pseudoalteromonas atlantica (strain T6c / ATCC BAA-1087), this protein is Succinyl-diaminopimelate desuccinylase.